Reading from the N-terminus, the 401-residue chain is MKHAYIVDAIRTPFGRYAGGLAAVRADDLGAIPIAALIERNPSVNWAQVDDVIYGCANQAGEDNRNVGRMSALLAGLPVEVPATTVNRLCGSSLDAIAMAARAIKAGEAHLIIAGGVESMSRAPYVMGKSEGAFGRTQKIEDTTMGWRFINPKLKAMYGVDTMPQTAENVAEQFGIQREDQDQFAYTSQQRTAAAQAKGYFAKEIVPVTIPQRKGEPVVIATDEHPRASTTLEGLAKLKGVVKPEGSVTAGNASGINDGAAAVLIASDEAVAQYQLKARAKIIASTTVGIEPRIMGFAPAPAIKKLLKQANLTLDQMDVIELNEAFAAQALACTRDLGLADDDARVNPNGGAIALGHPLGASGARLVTTALNQLEQSGGKYALCSMCIGVGQGIALIIERV.

The active-site Acyl-thioester intermediate is Cys90. Active-site proton acceptor residues include His357 and Cys387.

This sequence belongs to the thiolase-like superfamily. Thiolase family.

It carries out the reaction succinyl-CoA + acetyl-CoA = 3-oxoadipyl-CoA + CoA. It participates in aromatic compound metabolism; beta-ketoadipate pathway; acetyl-CoA and succinyl-CoA from 3-oxoadipate: step 2/2. Its function is as follows. Catalyzes thiolytic cleavage of beta-ketoadipyl-CoA to succinyl-CoA and acetyl-CoA. This Acinetobacter baylyi (strain ATCC 33305 / BD413 / ADP1) protein is Beta-ketoadipyl-CoA thiolase (catF).